Reading from the N-terminus, the 109-residue chain is Fluoride-specific ion channel FluC (109 aa).

A run of 3 helical transmembrane segments spans residues 21-41 (FFLN…GFVI), 52-72 (ILLT…LFLY), and 83-103 (LFFY…AGFL).

It belongs to the fluoride channel Fluc/FEX (TC 1.A.43) family.

The protein localises to the cell inner membrane. It carries out the reaction fluoride(in) = fluoride(out). Fluoride-specific ion channel. Important for reducing fluoride concentration in the cell, thus reducing its toxicity. The protein is Fluoride-specific ion channel FluC of Prochlorococcus marinus (strain MIT 9515).